Here is a 644-residue protein sequence, read N- to C-terminus: Kelch-like protein 34 (644 aa).

A BTB domain is found at 29-96 (CDVTLETEGS…IYTAWLSLSM (68 aa)). One can recognise a BACK domain in the interval 131-238 (CCFAANVAAR…PADVLRRVYS (108 aa)). The tract at residues 304 to 329 (AARGQVAAPEPEEEEEELEEEEEEEE) is disordered. Residues 313–329 (EPEEEEEELEEEEEEEE) show a composition bias toward acidic residues. Kelch repeat units follow at residues 320–366 (ELEE…TAGN), 367–425 (FLFV…AVGE), 426–473 (RLLA…VGDR), 475–526 (VVYI…VLRG), 528–571 (VFAF…VVEE), and 573–623 (ALLL…VLQL).

This chain is Kelch-like protein 34 (KLHL34), found in Homo sapiens (Human).